Consider the following 502-residue polypeptide: MSELRDTRLEKANTLEQLGQGPYALTFDPSHRMAELQADHADLPNGEERELSVAVAGRVMTRRVMGKLAFFTLADETGTIQLFLEKAGLEAQQEGWFKQITSLVDAGDWLGVSGTLRRTDRGELSVKVRDWRMLSKSLQPLPDKWHGLADVEKRYRQRYLDLIVSPQSRETFRRRALLVSGIRRWLDERQFLEIETPVLQSEAGGADARPFITHHNTLDLPLYLRIATELHLKRLVVGGFERVYELGRIFRNEGMSTRHNPEFTSVEVYQAYSDYIGMMELTEAMIAEVCQQVCGGTRIHYQGTDIDLTPPWRRATMHELVEEATGLNFEAFTTRAQAAEAMEAAGLEVPGAADSVGRLLNEAFEQRVEASLIQPTFVTDYPIEISPLARKHRSKPGLVERFELFIVGRETANAFSELIDPVDQRQRLEAQQARKAAGDLEAQGLDEDFVHALEVGMPPTGGLGIGIDRLVMLLTDSPSIRDVIAFPLMRPESRPDEAPSVG.

Mg(2+)-binding residues include Glu-403 and Glu-410.

This sequence belongs to the class-II aminoacyl-tRNA synthetase family. As to quaternary structure, homodimer. It depends on Mg(2+) as a cofactor.

Its subcellular location is the cytoplasm. The catalysed reaction is tRNA(Lys) + L-lysine + ATP = L-lysyl-tRNA(Lys) + AMP + diphosphate. The polypeptide is Lysine--tRNA ligase (Synechococcus sp. (strain CC9902)).